The primary structure comprises 535 residues: T-complex protein 1 subunit epsilon (535 aa).

This sequence belongs to the TCP-1 chaperonin family. In terms of assembly, heterooligomeric complex of about 850 to 900 kDa that forms two stacked rings, 12 to 16 nm in diameter.

The protein localises to the cytoplasm. Molecular chaperone; assists the folding of proteins upon ATP hydrolysis. Known to play a role, in vitro, in the folding of actin and tubulin. The polypeptide is T-complex protein 1 subunit epsilon (Arabidopsis thaliana (Mouse-ear cress)).